A 167-amino-acid chain; its full sequence is Xanthine-guanine phosphoribosyltransferase (167 aa).

5-phospho-alpha-D-ribose 1-diphosphate-binding positions include 47 to 48, glutamine 79, and 102 to 110; these read RG and DDLVDSGKT. Glutamine 79 is a binding site for GMP. Aspartate 103 is a binding site for Mg(2+). Aspartate 106 and isoleucine 149 together coordinate guanine. Xanthine contacts are provided by aspartate 106 and isoleucine 149. GMP-binding positions include 106-110 and 148-149; these read DSGKT and WI.

Belongs to the purine/pyrimidine phosphoribosyltransferase family. XGPT subfamily. As to quaternary structure, homotetramer. Requires Mg(2+) as cofactor.

The protein resides in the cell inner membrane. The catalysed reaction is GMP + diphosphate = guanine + 5-phospho-alpha-D-ribose 1-diphosphate. It catalyses the reaction XMP + diphosphate = xanthine + 5-phospho-alpha-D-ribose 1-diphosphate. It carries out the reaction IMP + diphosphate = hypoxanthine + 5-phospho-alpha-D-ribose 1-diphosphate. It functions in the pathway purine metabolism; GMP biosynthesis via salvage pathway; GMP from guanine: step 1/1. Its pathway is purine metabolism; XMP biosynthesis via salvage pathway; XMP from xanthine: step 1/1. Purine salvage pathway enzyme that catalyzes the transfer of the ribosyl-5-phosphate group from 5-phospho-alpha-D-ribose 1-diphosphate (PRPP) to the N9 position of the 6-oxopurines guanine and xanthine to form the corresponding ribonucleotides GMP (guanosine 5'-monophosphate) and XMP (xanthosine 5'-monophosphate), with the release of PPi. To a lesser extent, also acts on hypoxanthine. The polypeptide is Xanthine-guanine phosphoribosyltransferase (Cereibacter sphaeroides (strain ATCC 17029 / ATH 2.4.9) (Rhodobacter sphaeroides)).